Consider the following 119-residue polypeptide: MFKKNDRSQSRERRHMRVRKKIFGTAERPRLSVYRSEKHIYAQLIDDVEGKTLVAASSSEKGFDGVGSNKEGAKLVGKMIAEKALEKGLKKVVFDRGGFIYHGRIKELAEGAREAGLDF.

The protein belongs to the universal ribosomal protein uL18 family. Part of the 50S ribosomal subunit; part of the 5S rRNA/L5/L18/L25 subcomplex. Contacts the 5S and 23S rRNAs.

Functionally, this is one of the proteins that bind and probably mediate the attachment of the 5S RNA into the large ribosomal subunit, where it forms part of the central protuberance. This chain is Large ribosomal subunit protein uL18, found in Clostridium botulinum (strain Loch Maree / Type A3).